The sequence spans 349 residues: Protein-glutamate methylesterase/protein-glutamine glutaminase (349 aa).

One can recognise a Response regulatory domain in the interval 5 to 122 (KVLVVDDSAF…SLDLYKVKDE (118 aa)). Aspartate 56 carries the post-translational modification 4-aspartylphosphate. Residues 156–349 (ARPQQAIVAI…AAAIVQLIGE (194 aa)) form the CheB-type methylesterase domain. Catalysis depends on residues serine 168, histidine 195, and aspartate 291.

It belongs to the CheB family. In terms of processing, phosphorylated by CheA. Phosphorylation of the N-terminal regulatory domain activates the methylesterase activity.

Its subcellular location is the cytoplasm. The catalysed reaction is [protein]-L-glutamate 5-O-methyl ester + H2O = L-glutamyl-[protein] + methanol + H(+). The enzyme catalyses L-glutaminyl-[protein] + H2O = L-glutamyl-[protein] + NH4(+). Its function is as follows. Involved in chemotaxis. Part of a chemotaxis signal transduction system that modulates chemotaxis in response to various stimuli. Catalyzes the demethylation of specific methylglutamate residues introduced into the chemoreceptors (methyl-accepting chemotaxis proteins or MCP) by CheR. Also mediates the irreversible deamidation of specific glutamine residues to glutamic acid. The sequence is that of Protein-glutamate methylesterase/protein-glutamine glutaminase from Geobacillus kaustophilus (strain HTA426).